The following is a 1503-amino-acid chain: Dynein axonemal assembly factor 1 homolog (1503 aa).

LRR repeat units follow at residues 34 to 56 (RLNDVLYLHYQGFQCIENLEEYT), 57 to 78 (ELKCLWLECNAISEIQGLEKLG), 79 to 100 (KLKCLFLQNNLITKIENLDPCR), 101 to 122 (ELDTLNLSSNHIRKIQNIGTNI), 125 to 146 (VLNTLTIASNYLKDSDSLSDLI), and 150 to 171 (TLSVLDLSNNRIDDILIVKIFE). The LRRCT domain occupies 185 to 223 (PVVSRLPQYRKTLILACKELTYLDSRPVFPRDRACAEAW). 4 disordered regions span residues 249–280 (SINCTIRMRNSHRPPDQQDPLLRSSDSEDDTC), 305–328 (EQPISDHGTSTSSSVEDKDGTSSQ), 956–1033 (DSGD…DHDE), and 1295–1315 (STNNHSFSTKKTLPTKTSTSE). A compositionally biased stretch (acidic residues) spans 973–985 (TESEDYDTAEDEY). Residues 1014 to 1031 (QKQDKPDTVEEVGKKNDH) are compositionally biased toward basic and acidic residues. Positions 1303-1314 (TKKTLPTKTSTS) are enriched in low complexity.

Belongs to the DNAAF1 family.

The protein resides in the cell projection. It localises to the cilium. Functionally, cilium-specific protein required for cilia structures. In Drosophila erecta (Fruit fly), this protein is Dynein axonemal assembly factor 1 homolog (dtr).